Reading from the N-terminus, the 1186-residue chain is Pumilio homolog 1 (1186 aa).

At Ser-2 the chain carries N-acetylserine. The residue at position 19 (Ser-19) is a Phosphoserine. Residues 22-73 (LKHHPQEPANPNMPVVLTSGTGSQAQPQPAANQALAAGTHSSPVPGSIGVAG) form a disordered region. Positions 45 to 58 (QAQPQPAANQALAA) are enriched in low complexity. Phosphoserine is present on residues Ser-75, Ser-98, and Ser-106. At Thr-112 the chain carries Phosphothreonine. Ser-124, Ser-159, Ser-197, Ser-209, and Ser-229 each carry phosphoserine. Residues 233 to 272 (SCLRKGGFGPRDADSDENDKGEKKNKGTFDGDKLGDLKEE) form a disordered region. Residues 250-272 (NDKGEKKNKGTFDGDKLGDLKEE) are compositionally biased toward basic and acidic residues. The residue at position 305 (Ser-305) is a Phosphoserine. Positions 485-502 (TNSANQQTTPQAQQGQQQ) are enriched in low complexity. Disordered stretches follow at residues 485–524 (TNSA…GQQT) and 613–648 (AGTT…FYGN). Positions 511 to 524 (RPLTPNQNQQGQQT) are enriched in polar residues. Thr-514 bears the Phosphothreonine mark. A compositionally biased stretch (low complexity) spans 626 to 639 (QQPQPQPQQQPNNN). Ser-709 and Ser-714 each carry phosphoserine. The disordered stretch occupies residues 742 to 773 (GPVGMPLPSQGPGHSQTPPPSLSSHGSSSSLN). The segment covering 763–773 (LSSHGSSSSLN) has biased composition (low complexity). Omega-N-methylarginine is present on Arg-796. Phosphoserine is present on residues Ser-806 and Ser-822. Positions 828–1168 (GRSRLLEDFR…HILAKLEKYY (341 aa)) constitute a PUM-HD domain. 8 Pumilio repeats span residues 848–883 (EIAG…LVFN), 884–919 (EILQ…ALAE), 920–955 (RIRG…EMVR), 956–991 (ELDG…FIID), 992–1027 (AFKG…PILE), 1028–1063 (ELHQ…KIVA), 1064–1099 (EIRG…VLID), and 1103–1142 (TMND…IVMH). Positions 863-867 (SRFIQ) are adenine-nucleotide binding in RNA target. A uracil-nucleotide binding in RNA target region spans residues 899-903 (NYVIQ). The tract at residues 935–939 (CRVIQ) is adenine-nucleotide binding in RNA target. The interval 971 to 975 (NHVVQ) is non-specific-nucleotide binding in RNA target. The interval 1007–1011 (CRVIQ) is adenine-nucleotide binding in RNA target. The segment at 1043–1047 (NYVIQ) is uracil-nucleotide binding in RNA target. Residues 1079 to 1083 (SNVVE) form a guanine-nucleotide binding in RNA target region. Residues 1122 to 1126 (NYVVQ) are uracil-nucleotide binding in RNA target.

As to quaternary structure, recruits the CCR4-POP2-NOT deadenylase leading to translational inhibition and mRNA degradation. In case of viral infection, interacts with DHX58. Interacts with TRIM71 (via NHL repeats) in an RNA-dependent manner. Post-translationally, phosphorylation at Ser-714 promotes RNA-binding activity. Following growth factor stimulation phosphorylated at Ser-714, promoting binding to the 3'-UTR of CDKN1B/p27 mRNA. Expressed in brain, heart, kidney, muscle, intestine and stomach. Not expressed in cerebellum, corpus callosum, caudate nucleus, hippocampus, medulla oblongata and putamen. Expressed in all fetal tissues tested.

Its subcellular location is the cytoplasm. It localises to the P-body. The protein localises to the cytoplasmic granule. Sequence-specific RNA-binding protein that acts as a post-transcriptional repressor by binding the 3'-UTR of mRNA targets. Binds to an RNA consensus sequence, the Pumilio Response Element (PRE), 5'-UGUANAUA-3', that is related to the Nanos Response Element (NRE). Mediates post-transcriptional repression of transcripts via different mechanisms: acts via direct recruitment of the CCR4-POP2-NOT deadenylase leading to translational inhibition and mRNA degradation. Also mediates deadenylation-independent repression by promoting accessibility of miRNAs. Following growth factor stimulation, phosphorylated and binds to the 3'-UTR of CDKN1B/p27 mRNA, inducing a local conformational change that exposes miRNA-binding sites, promoting association of miR-221 and miR-222, efficient suppression of CDKN1B/p27 expression, and rapid entry to the cell cycle. Acts as a post-transcriptional repressor of E2F3 mRNAs by binding to its 3'-UTR and facilitating miRNA regulation. Represses a program of genes necessary to maintain genomic stability such as key mitotic, DNA repair and DNA replication factors. Its ability to repress those target mRNAs is regulated by the lncRNA NORAD (non-coding RNA activated by DNA damage) which, due to its high abundance and multitude of PUMILIO binding sites, is able to sequester a significant fraction of PUM1 and PUM2 in the cytoplasm. Involved in neuronal functions by regulating ATXN1 mRNA levels: acts by binding to the 3'-UTR of ATXN1 transcripts, leading to their down-regulation independently of the miRNA machinery. Plays a role in cytoplasmic sensing of viral infection. In testis, acts as a post-transcriptional regulator of spermatogenesis by binding to the 3'-UTR of mRNAs coding for regulators of p53/TP53. Involved in embryonic stem cell renewal by facilitating the exit from the ground state: acts by targeting mRNAs coding for naive pluripotency transcription factors and accelerates their down-regulation at the onset of differentiation. Binds specifically to miRNA MIR199A precursor, with PUM2, regulates miRNA MIR199A expression at a postranscriptional level. This is Pumilio homolog 1 from Homo sapiens (Human).